The following is a 1176-amino-acid chain: DNA-directed RNA polymerase subunit beta (1176 aa).

Residues Thr-13 to Val-30 are compositionally biased toward polar residues. Positions Thr-13–Asn-35 are disordered.

This sequence belongs to the RNA polymerase beta chain family. As to quaternary structure, the RNAP catalytic core consists of 2 alpha, 1 beta, 1 beta' and 1 omega subunit. When a sigma factor is associated with the core the holoenzyme is formed, which can initiate transcription.

It carries out the reaction RNA(n) + a ribonucleoside 5'-triphosphate = RNA(n+1) + diphosphate. Functionally, DNA-dependent RNA polymerase catalyzes the transcription of DNA into RNA using the four ribonucleoside triphosphates as substrates. This Mycobacterium marinum (strain ATCC BAA-535 / M) protein is DNA-directed RNA polymerase subunit beta.